We begin with the raw amino-acid sequence, 240 residues long: Proteasome subunit alpha (240 aa).

Belongs to the peptidase T1A family. The 20S proteasome core is composed of 14 alpha and 14 beta subunits that assemble into four stacked heptameric rings, resulting in a barrel-shaped structure. The two inner rings, each composed of seven catalytic beta subunits, are sandwiched by two outer rings, each composed of seven alpha subunits. The catalytic chamber with the active sites is on the inside of the barrel. Has a gated structure, the ends of the cylinder being occluded by the N-termini of the alpha-subunits. Is capped at one or both ends by the proteasome regulatory ATPase, PAN.

The protein localises to the cytoplasm. The formation of the proteasomal ATPase PAN-20S proteasome complex, via the docking of the C-termini of PAN into the intersubunit pockets in the alpha-rings, triggers opening of the gate for substrate entry. Interconversion between the open-gate and close-gate conformations leads to a dynamic regulation of the 20S proteasome proteolysis activity. Component of the proteasome core, a large protease complex with broad specificity involved in protein degradation. This chain is Proteasome subunit alpha, found in Methanoculleus marisnigri (strain ATCC 35101 / DSM 1498 / JR1).